The sequence spans 423 residues: Glycine-rich protein 1 (423 aa).

Positions 1–20 (MKKICLTFVFLLSLFPIYSS) are cleaved as a signal peptide. Disordered stretches follow at residues 28–47 (TIES…AGPA), 78–133 (DDDN…SKKN), 159–219 (KGGS…GAGA), and 236–288 (GASA…ASAG). The span at 31 to 42 (SGSSKSSGSSVG) shows a compositional bias: low complexity. Composition is skewed to basic and acidic residues over residues 81 to 93 (NKDK…DGKT) and 102 to 111 (QNGDDVKSDN). Residues 159-172 (KGGSANNGGEGGAT) are compositionally biased toward gly residues. The span at 173–183 (SAGSAGATSGA) shows a compositional bias: low complexity. Composition is skewed to gly residues over residues 205–219 (GAGG…GAGA) and 236–247 (GASAGAGAGGAQ). Residues 248–284 (GDAEAASAGSTAGSTSSGGAAASGASSGAGSSDSGQG) are compositionally biased toward low complexity.

As to expression, nacreous layer of shell (at protein level).

Its subcellular location is the secreted. This chain is Glycine-rich protein 1, found in Pinctada maxima (Silver-lipped pearl oyster).